We begin with the raw amino-acid sequence, 136 residues long: Nucleoside diphosphate kinase (136 aa).

K10, F58, R86, T92, R104, and N114 together coordinate ATP. H117 (pros-phosphohistidine intermediate) is an active-site residue.

Belongs to the NDK family. As to quaternary structure, homotetramer. Mg(2+) serves as cofactor.

The protein resides in the cytoplasm. The catalysed reaction is a 2'-deoxyribonucleoside 5'-diphosphate + ATP = a 2'-deoxyribonucleoside 5'-triphosphate + ADP. The enzyme catalyses a ribonucleoside 5'-diphosphate + ATP = a ribonucleoside 5'-triphosphate + ADP. Functionally, major role in the synthesis of nucleoside triphosphates other than ATP. The ATP gamma phosphate is transferred to the NDP beta phosphate via a ping-pong mechanism, using a phosphorylated active-site intermediate. This Corynebacterium glutamicum (strain R) protein is Nucleoside diphosphate kinase.